Consider the following 341-residue polypeptide: Small ribosomal subunit biogenesis GTPase RsgA (341 aa).

The 157-residue stretch at 112–268 (RQQLIAANLD…LIDTPGMREL (157 aa)) folds into the CP-type G domain. Residues 157 to 160 (TKVD) and 210 to 218 (GSSGAGKST) each bind GTP. Residues Cys-290, Cys-295, His-297, and Cys-303 each coordinate Zn(2+).

Belongs to the TRAFAC class YlqF/YawG GTPase family. RsgA subfamily. Monomer. Associates with 30S ribosomal subunit, binds 16S rRNA. Zn(2+) is required as a cofactor.

It is found in the cytoplasm. One of several proteins that assist in the late maturation steps of the functional core of the 30S ribosomal subunit. Helps release RbfA from mature subunits. May play a role in the assembly of ribosomal proteins into the subunit. Circularly permuted GTPase that catalyzes slow GTP hydrolysis, GTPase activity is stimulated by the 30S ribosomal subunit. The sequence is that of Small ribosomal subunit biogenesis GTPase RsgA from Xylella fastidiosa (strain Temecula1 / ATCC 700964).